We begin with the raw amino-acid sequence, 67 residues long: uncharacterized protein (67 aa).

The chain crosses the membrane as a helical span at residues 4–24 (WIFAILMLGVAIVLSIIATFF).

It localises to the membrane. This is an uncharacterized protein from Bacillus anthracis.